We begin with the raw amino-acid sequence, 414 residues long: Serine-type anaerobic sulfatase-maturating enzyme (414 aa).

Positions 5 to 250 (TYAPFAKPLY…LCTIFDEWVK (246 aa)) constitute a Radical SAM core domain. Positions 24 and 28 each coordinate [4Fe-4S] cluster. S-adenosyl-L-methionine is bound at residue tyrosine 30. Cysteine 31 contacts [4Fe-4S] cluster. Positions 76, 131, and 143 each coordinate S-adenosyl-L-methionine. Cysteine 276, cysteine 282, and cysteine 297 together coordinate [4Fe-4S] cluster. Aspartate 298 acts as the Proton acceptor in catalysis. [4Fe-4S] cluster-binding residues include cysteine 339, cysteine 342, cysteine 348, cysteine 352, and cysteine 371.

Belongs to the radical SAM superfamily. Anaerobic sulfatase-maturating enzyme family. The cofactor is [4Fe-4S] cluster.

The enzyme catalyses L-seryl-[sulfatase] + S-adenosyl-L-methionine = 3-oxo-L-alanyl-[sulfatase] + 5'-deoxyadenosine + L-methionine + H(+). It functions in the pathway protein modification; sulfatase oxidation. Involved in 'Ser-type' sulfatase maturation under anaerobic conditions. Links the heparin and the chondroitin sulfate utilization pathways which contribute to the colonization of the intestinal tract. May catalyze the activation of chondro-6-sulfatase, i.e. the post-translational modification of a specific serine residue into 3-oxoalanine (also known as C(alpha)-formylglycine (FGly)), by a free radical chemical mechanism initiated via the reductive cleavage of S-adenosyl-L-methionine (SAM). Is also able to oxidize a cysteine residue in a synthetic substrate to FGly in vitro, but not in a recombinant Cys-type sulfatase in vivo. But since B.thetaiotaomicron possesses only Ser-type sulfatases, the oxidation of serine residues to FGly is the sole physiological activity. This is Serine-type anaerobic sulfatase-maturating enzyme (chuR) from Bacteroides thetaiotaomicron (strain ATCC 29148 / DSM 2079 / JCM 5827 / CCUG 10774 / NCTC 10582 / VPI-5482 / E50).